We begin with the raw amino-acid sequence, 365 residues long: MNILFAGGGTGGHLYPAVAMAAMLKEMVPGVELSFAGTASGIEAGEVPRLGYRLHLIPVRGLKRGRSLSALLSNIGVLTDFAASLFRAAALIRRERPDVVVGTGGFVSAPVLLAAQLLGRKTLIQEQNAFPGLTTRLLSILAREVHVAFREATGYLMKKRGVFLTGNPARSFPQRDSSIGREAFGFDPLLPTLLVFGGSRGARAINNAVLRHLGRLTAGSNLIWQTGALDFGRIEKEVSPGRNLWIGAYIEDMGSAYAAADLVLCRAGASSIAELTNLRKPSVLVPYPHATGDHQRHNARALSGPGAALMIEDRELENPEAIEGVIALLHDRERLQMMGAEAGRLSAPEAARILAGRIIDLAEEH.

UDP-N-acetyl-alpha-D-glucosamine contacts are provided by residues 10 to 12 (TGG), Asn128, Arg170, Ser199, Ile250, and Gln295.

This sequence belongs to the glycosyltransferase 28 family. MurG subfamily.

The protein localises to the cell inner membrane. The enzyme catalyses di-trans,octa-cis-undecaprenyl diphospho-N-acetyl-alpha-D-muramoyl-L-alanyl-D-glutamyl-meso-2,6-diaminopimeloyl-D-alanyl-D-alanine + UDP-N-acetyl-alpha-D-glucosamine = di-trans,octa-cis-undecaprenyl diphospho-[N-acetyl-alpha-D-glucosaminyl-(1-&gt;4)]-N-acetyl-alpha-D-muramoyl-L-alanyl-D-glutamyl-meso-2,6-diaminopimeloyl-D-alanyl-D-alanine + UDP + H(+). It functions in the pathway cell wall biogenesis; peptidoglycan biosynthesis. Functionally, cell wall formation. Catalyzes the transfer of a GlcNAc subunit on undecaprenyl-pyrophosphoryl-MurNAc-pentapeptide (lipid intermediate I) to form undecaprenyl-pyrophosphoryl-MurNAc-(pentapeptide)GlcNAc (lipid intermediate II). In Chlorobium luteolum (strain DSM 273 / BCRC 81028 / 2530) (Pelodictyon luteolum), this protein is UDP-N-acetylglucosamine--N-acetylmuramyl-(pentapeptide) pyrophosphoryl-undecaprenol N-acetylglucosamine transferase.